A 384-amino-acid polypeptide reads, in one-letter code: Queuine tRNA-ribosyltransferase (384 aa).

D92 functions as the Proton acceptor in the catalytic mechanism. Residues 92–96, D146, Q192, and G219 contribute to the substrate site; that span reads DSGGF. An RNA binding region spans residues 250 to 256; the sequence is GVGTPAE. D269 serves as the catalytic Nucleophile. The tract at residues 274-278 is RNA binding; important for wobble base 34 recognition; sequence TRNAR. Positions 307, 309, 312, and 338 each coordinate Zn(2+).

It belongs to the queuine tRNA-ribosyltransferase family. As to quaternary structure, homodimer. Within each dimer, one monomer is responsible for RNA recognition and catalysis, while the other monomer binds to the replacement base PreQ1. Zn(2+) is required as a cofactor.

It catalyses the reaction 7-aminomethyl-7-carbaguanine + guanosine(34) in tRNA = 7-aminomethyl-7-carbaguanosine(34) in tRNA + guanine. It functions in the pathway tRNA modification; tRNA-queuosine biosynthesis. Functionally, catalyzes the base-exchange of a guanine (G) residue with the queuine precursor 7-aminomethyl-7-deazaguanine (PreQ1) at position 34 (anticodon wobble position) in tRNAs with GU(N) anticodons (tRNA-Asp, -Asn, -His and -Tyr). Catalysis occurs through a double-displacement mechanism. The nucleophile active site attacks the C1' of nucleotide 34 to detach the guanine base from the RNA, forming a covalent enzyme-RNA intermediate. The proton acceptor active site deprotonates the incoming PreQ1, allowing a nucleophilic attack on the C1' of the ribose to form the product. After dissociation, two additional enzymatic reactions on the tRNA convert PreQ1 to queuine (Q), resulting in the hypermodified nucleoside queuosine (7-(((4,5-cis-dihydroxy-2-cyclopenten-1-yl)amino)methyl)-7-deazaguanosine). This Desulfosudis oleivorans (strain DSM 6200 / JCM 39069 / Hxd3) (Desulfococcus oleovorans) protein is Queuine tRNA-ribosyltransferase.